The primary structure comprises 310 residues: Porphobilinogen deaminase (310 aa).

Residue Cys236 is modified to S-(dipyrrolylmethanemethyl)cysteine.

The protein belongs to the HMBS family. In terms of assembly, monomer. Dipyrromethane is required as a cofactor.

The enzyme catalyses 4 porphobilinogen + H2O = hydroxymethylbilane + 4 NH4(+). The protein operates within porphyrin-containing compound metabolism; protoporphyrin-IX biosynthesis; coproporphyrinogen-III from 5-aminolevulinate: step 2/4. Tetrapolymerization of the monopyrrole PBG into the hydroxymethylbilane pre-uroporphyrinogen in several discrete steps. The protein is Porphobilinogen deaminase of Nitratiruptor sp. (strain SB155-2).